The chain runs to 225 residues: Cytidylate kinase (225 aa).

Residue 11–19 (GPAGAGKGT) coordinates ATP. Basic and acidic residues predominate over residues 169 to 185 (MDRIKSRIEERDARDQS). The tract at residues 169 to 195 (MDRIKSRIEERDARDQSRATAPLAAAP) is disordered.

Belongs to the cytidylate kinase family. Type 1 subfamily.

Its subcellular location is the cytoplasm. The catalysed reaction is CMP + ATP = CDP + ADP. It carries out the reaction dCMP + ATP = dCDP + ADP. This chain is Cytidylate kinase, found in Magnetococcus marinus (strain ATCC BAA-1437 / JCM 17883 / MC-1).